A 494-amino-acid polypeptide reads, in one-letter code: ATP synthase subunit alpha 1 (494 aa).

Belongs to the ATPase alpha/beta chains family. As to quaternary structure, F-type ATPases have 2 components, CF(1) - the catalytic core - and CF(0) - the membrane proton channel. CF(1) has five subunits: alpha(3), beta(3), gamma(1), delta(1), epsilon(1). CF(0) has three main subunits: a(1), b(2) and c(9-12). The alpha and beta chains form an alternating ring which encloses part of the gamma chain. CF(1) is attached to CF(0) by a central stalk formed by the gamma and epsilon chains, while a peripheral stalk is formed by the delta and b chains.

The protein localises to the cell inner membrane. The catalysed reaction is ATP + H2O + 4 H(+)(in) = ADP + phosphate + 5 H(+)(out). Its function is as follows. Produces ATP from ADP in the presence of a proton gradient across the membrane. The alpha chain is a regulatory subunit. The chain is ATP synthase subunit alpha 1 from Hahella chejuensis (strain KCTC 2396).